The primary structure comprises 447 residues: Glutamate--tRNA ligase 1 (447 aa).

A 'HIGH' region motif is present at residues 10–20 (PSPTGMLHVGN). Positions 240–244 (KISKR) match the 'KMSKS' region motif. Lysine 243 lines the ATP pocket.

This sequence belongs to the class-I aminoacyl-tRNA synthetase family. Glutamate--tRNA ligase type 1 subfamily. As to quaternary structure, monomer.

It localises to the cytoplasm. The catalysed reaction is tRNA(Glu) + L-glutamate + ATP = L-glutamyl-tRNA(Glu) + AMP + diphosphate. Catalyzes the attachment of glutamate to tRNA(Glu) in a two-step reaction: glutamate is first activated by ATP to form Glu-AMP and then transferred to the acceptor end of tRNA(Glu). In Rickettsia felis (strain ATCC VR-1525 / URRWXCal2) (Rickettsia azadi), this protein is Glutamate--tRNA ligase 1.